Here is a 338-residue protein sequence, read N- to C-terminus: Lipoate-protein ligase A (338 aa).

Positions 29-216 (PATQRVLFLW…AFFAHYGERV (188 aa)) constitute a BPL/LPL catalytic domain. Residues arginine 71, 76-79 (GAVF), and lysine 134 contribute to the ATP site. Lysine 134 contacts (R)-lipoate.

It belongs to the LplA family. As to quaternary structure, monomer.

The protein localises to the cytoplasm. The enzyme catalyses L-lysyl-[lipoyl-carrier protein] + (R)-lipoate + ATP = N(6)-[(R)-lipoyl]-L-lysyl-[lipoyl-carrier protein] + AMP + diphosphate + H(+). The protein operates within protein modification; protein lipoylation via exogenous pathway; protein N(6)-(lipoyl)lysine from lipoate: step 1/2. It functions in the pathway protein modification; protein lipoylation via exogenous pathway; protein N(6)-(lipoyl)lysine from lipoate: step 2/2. Catalyzes both the ATP-dependent activation of exogenously supplied lipoate to lipoyl-AMP and the transfer of the activated lipoyl onto the lipoyl domains of lipoate-dependent enzymes. This chain is Lipoate-protein ligase A, found in Escherichia coli O9:H4 (strain HS).